Consider the following 202-residue polypeptide: Orotate phosphoribosyltransferase (202 aa).

5-phospho-alpha-D-ribose 1-diphosphate-binding positions include lysine 93 and 113-121 (EDIITTGGS). Threonine 117 and arginine 145 together coordinate orotate.

It belongs to the purine/pyrimidine phosphoribosyltransferase family. PyrE subfamily. In terms of assembly, homodimer. The cofactor is Mg(2+).

It carries out the reaction orotidine 5'-phosphate + diphosphate = orotate + 5-phospho-alpha-D-ribose 1-diphosphate. Its pathway is pyrimidine metabolism; UMP biosynthesis via de novo pathway; UMP from orotate: step 1/2. Its function is as follows. Catalyzes the transfer of a ribosyl phosphate group from 5-phosphoribose 1-diphosphate to orotate, leading to the formation of orotidine monophosphate (OMP). The polypeptide is Orotate phosphoribosyltransferase (Campylobacter fetus subsp. fetus (strain 82-40)).